The following is a 753-amino-acid chain: Polyadenylate-binding protein, cytoplasmic and nuclear (753 aa).

Over residues 1 to 43 (MSAEASTTPAAETPVNGTPETSTTPAAPAAEATAAETAAPSTS) the composition is skewed to low complexity. Residues 1–49 (MSAEASTTPAAETPVNGTPETSTTPAAPAAEATAAETAAPSTSQPHSAS) form a disordered region. RRM domains lie at 48–126 (ASLY…WSQR), 136–213 (GNVF…HHIS), 229–306 (TNVY…RAQK), and 332–460 (VNLY…LAQR). 3 disordered regions span residues 363–417 (VMRD…SDKK), 607–649 (RGPG…PAAG), and 727–753 (GTEG…ENKS). Residues 376–417 (DSDKEKKEESKEEKPEAAEKTEEAAKESGDDQDKENKKSDKK) are compositionally biased toward basic and acidic residues. Gly residues predominate over residues 607-619 (RGPGYGQGRGGVP). A compositionally biased stretch (low complexity) spans 633-649 (QNAQPAAGRGEEAPAAG). Positions 647-724 (AAGLTAQSLA…ALSVYDEYMK (78 aa)) constitute a PABC domain. Over residues 737 to 753 (PKPKEAATEESTEENKS) the composition is skewed to basic and acidic residues.

The protein belongs to the polyadenylate-binding protein type-1 family.

The protein localises to the cytoplasm. The protein resides in the nucleus. Functionally, binds the poly(A) tail of mRNA. Appears to be an important mediator of the multiple roles of the poly(A) tail in mRNA biogenesis, stability and translation. In the nucleus, involved in both mRNA cleavage and polyadenylation. Is also required for efficient mRNA export to the cytoplasm. Acts in concert with a poly(A)-specific nuclease (PAN) to affect poly(A) tail shortening, which may occur concomitantly with either nucleocytoplasmic mRNA transport or translational initiation. In the cytoplasm, stimulates translation initiation and regulates mRNA decay through translation termination-coupled poly(A) shortening, probably mediated by PAN. The sequence is that of Polyadenylate-binding protein, cytoplasmic and nuclear (pab1) from Aspergillus terreus (strain NIH 2624 / FGSC A1156).